The sequence spans 751 residues: Dachshund homolog 1 (751 aa).

The tract at residues 1–178 (MAVPAALIPP…PSPVENTPQN (178 aa)) is disordered. 2 stretches are compositionally biased toward low complexity: residues 20 to 53 (ISTSASSSGTTTSTSSATSSPAPSIGPPASSGPT) and 61 to 74 (ASSASSSAAATVTS). 2 stretches are compositionally biased toward gly residues: residues 75–97 (PGGGGGGSGGGGGSGGNGGGGGS) and 107–119 (SSGGGVSAGGGGA). The segment covering 120–156 (SSTPITASTGSSSSSSSSSSSSSSSSSSSSSSSSSSS) has biased composition (low complexity). Positions 167-178 (STPSPVENTPQN) are enriched in polar residues. Positions 182 to 268 (KMVDLRGAKV…LISRKDFETL (87 aa)) are DACHbox-N. Positions 182–377 (KMVDLRGAKV…VGSSGGSWDK (196 aa)) are interaction with SIX6 and HDAC3. Disordered regions lie at residues 273 to 295 (TNASSRPGRPPKRTQSVTSPENS), 351 to 393 (SNNQ…APVA), 467 to 525 (SPPS…RIPV), and 537 to 556 (MGLSPNVLPGPKEGDLAGHD). Composition is skewed to polar residues over residues 285–294 (RTQSVTSPEN) and 351–369 (SNNQHGADSENGDMNSSVG). The residue at position 484 (Ser-484) is a Phosphoserine. Positions 499–517 (SHPSSHRSSSVSSSPARTE) are enriched in low complexity. The interval 609–689 (SSIETLLTNI…KAKRKLQEAL (81 aa)) is DACHbox-C. Residues 620–699 (GLLKVAIDNA…EFETKRREQA (80 aa)) form an interaction with SIN3A region. Positions 623–711 (KVAIDNARAQ…TLKQAASADS (89 aa)) form a coiled coil.

The protein belongs to the DACH/dachshund family. Interacts with SIX1, SIX6 and EYA3. Interacts with NCOR1 and HDAC3 through its N-terminus. Interacts with SIN3A through its C-terminus. Interacts with SMAD3 and SMAD4. As to expression, expressed at higher levels in adult kidney and lung, and at lower levels in brain and testis. Expressed in embryonal kidneys, eyes, cochleae and limb buds.

The protein resides in the nucleus. Transcription factor that is involved in regulation of organogenesis. Seems to be a regulator of SIX1, SIX6 and probably SIX5. Corepression of precursor cell proliferation in myoblasts by SIX1 is switched to coactivation through recruitment of EYA3 to the SIX1-DACH1 complex. Transcriptional activation also seems to involve association of CREBBP. Seems to act as a corepressor of SIX6 in regulating proliferation by directly repressing cyclin-dependent kinase inhibitors, including the p27Kip1 promoter. Inhibits TGF-beta signaling through interaction with SMAD4 and NCOR1. Binds to chromatin DNA via its DACHbox-N domain. The sequence is that of Dachshund homolog 1 (Dach1) from Mus musculus (Mouse).